The following is a 919-amino-acid chain: Calcium-activated chloride channel regulator 4 (919 aa).

An N-terminal signal peptide occupies residues 1–21 (MGLFRGFVFLLVLCLLHQSNT). Residues 45-199 (DEKIIEQIED…GISGRNRVYK (155 aa)) are metalloprotease domain. An N-linked (GlcNAc...) asparagine glycan is attached at asparagine 75. Histidine 155 serves as a coordination point for Zn(2+). Glutamate 156 is an active-site residue. Zn(2+) is bound by residues histidine 159 and aspartate 166. Positions 306–476 (IVCLVLDKSG…NGLIDAFGAL (171 aa)) constitute a VWFA domain. N-linked (GlcNAc...) asparagine glycans are attached at residues asparagine 340, asparagine 504, asparagine 542, asparagine 588, asparagine 628, asparagine 811, asparagine 832, asparagine 837, and asparagine 852. Residues 870 to 893 (ANPDDIDPTPTPTPTPTPDKSHNS) form a disordered region. A helical membrane pass occupies residues 895–915 (VNISTLVLSVIGSVVIVNFIL).

It belongs to the CLCR family. In terms of processing, the translation product is autoproteolytically cleaved by the metalloprotease domain in the endoplasmic reticulum into a N-terminal and a C-terminal products that remain physically associated with each other. The cleavage is necessary for calcium-activated chloride channel (CaCC) activation activity. Primarily expressed in the digestive tract, mainly in colon. Detected in smaller amounts in brain, urogenital organs, testis, and salivary and mammary glands. Highly expressed in the epithelial layer and submucosal gland of the inferior turbinate mucosa. Lower levels in the epithelial layer of nasal polyp.

Its subcellular location is the cell membrane. The protein resides in the apical cell membrane. It is found in the secreted. Functionally, may be involved in mediating calcium-activated chloride conductance. The polypeptide is Calcium-activated chloride channel regulator 4 (CLCA4) (Homo sapiens (Human)).